A 352-amino-acid chain; its full sequence is Large ribosomal subunit protein uL10 (352 aa).

Residues 286-297 (DDEDALPEELQD) show a composition bias toward acidic residues. The disordered stretch occupies residues 286–352 (DDEDALPEEL…GAEGLGEMFG (67 aa)). The span at 299–310 (DAPAAPAGGEAD) shows a compositional bias: low complexity. Acidic residues predominate over residues 324–340 (EADDADDSDDDDDDDDG). Positions 343 to 352 (GAEGLGEMFG) are enriched in gly residues.

Belongs to the universal ribosomal protein uL10 family. In terms of assembly, part of the 50S ribosomal subunit. Forms part of the ribosomal stalk which helps the ribosome interact with GTP-bound translation factors. Forms a heptameric L10(L12)2(L12)2(L12)2 complex, where L10 forms an elongated spine to which the L12 dimers bind in a sequential fashion.

Forms part of the ribosomal stalk, playing a central role in the interaction of the ribosome with GTP-bound translation factors. The polypeptide is Large ribosomal subunit protein uL10 (Halobacterium salinarum (strain ATCC 700922 / JCM 11081 / NRC-1) (Halobacterium halobium)).